Here is a 944-residue protein sequence, read N- to C-terminus: Translation initiation factor IF-2 (944 aa).

Disordered stretches follow at residues 61–157 (IQAN…KAKQ) and 173–281 (TQSN…SHKI). Residues 132 to 150 (TFENQTPPTENTPKVVSHS) show a composition bias toward polar residues. Positions 175 to 185 (SNANNASNANN) are enriched in low complexity. The segment covering 186 to 203 (AKKEISEVKKQEQEIKRH) has biased composition (basic and acidic residues). Residues 204–215 (ENIKRRTGFRVI) show a composition bias toward basic residues. Positions 244 to 259 (EDIKKEWQEKDKQEAK) are enriched in basic and acidic residues. The tr-type G domain occupies 443 to 612 (ERPPVVTIMG…LIQAGIMELK (170 aa)). Residues 452–459 (GHVDHGKT) are G1. Position 452-459 (452-459 (GHVDHGKT)) interacts with GTP. The G2 stretch occupies residues 477–481 (GITQH). Residues 498 to 501 (DTPG) form a G3 region. Residues 498–502 (DTPGH) and 552–555 (NKMD) contribute to the GTP site. Residues 552-555 (NKMD) are G4. Residues 588-590 (SAK) form a G5 region.

It belongs to the TRAFAC class translation factor GTPase superfamily. Classic translation factor GTPase family. IF-2 subfamily.

Its subcellular location is the cytoplasm. Its function is as follows. One of the essential components for the initiation of protein synthesis. Protects formylmethionyl-tRNA from spontaneous hydrolysis and promotes its binding to the 30S ribosomal subunits. Also involved in the hydrolysis of GTP during the formation of the 70S ribosomal complex. The sequence is that of Translation initiation factor IF-2 (infB) from Helicobacter pylori (strain ATCC 700392 / 26695) (Campylobacter pylori).